We begin with the raw amino-acid sequence, 382 residues long: Dual-specificity RNA methyltransferase RlmN (382 aa).

Glu-96 (proton acceptor) is an active-site residue. Residues 102 to 340 (QNGRGTLCVS…VTVRTTRGDD (239 aa)) enclose the Radical SAM core domain. Residues Cys-109 and Cys-345 are joined by a disulfide bond. [4Fe-4S] cluster is bound by residues Cys-116, Cys-120, and Cys-123. Residues 170 to 171 (GE), Ser-202, 224 to 226 (SLH), and Asn-302 each bind S-adenosyl-L-methionine. Cys-345 acts as the S-methylcysteine intermediate in catalysis.

It belongs to the radical SAM superfamily. RlmN family. [4Fe-4S] cluster serves as cofactor.

It localises to the cytoplasm. The catalysed reaction is adenosine(2503) in 23S rRNA + 2 reduced [2Fe-2S]-[ferredoxin] + 2 S-adenosyl-L-methionine = 2-methyladenosine(2503) in 23S rRNA + 5'-deoxyadenosine + L-methionine + 2 oxidized [2Fe-2S]-[ferredoxin] + S-adenosyl-L-homocysteine. The enzyme catalyses adenosine(37) in tRNA + 2 reduced [2Fe-2S]-[ferredoxin] + 2 S-adenosyl-L-methionine = 2-methyladenosine(37) in tRNA + 5'-deoxyadenosine + L-methionine + 2 oxidized [2Fe-2S]-[ferredoxin] + S-adenosyl-L-homocysteine. In terms of biological role, specifically methylates position 2 of adenine 2503 in 23S rRNA and position 2 of adenine 37 in tRNAs. m2A2503 modification seems to play a crucial role in the proofreading step occurring at the peptidyl transferase center and thus would serve to optimize ribosomal fidelity. This is Dual-specificity RNA methyltransferase RlmN from Ectopseudomonas mendocina (strain ymp) (Pseudomonas mendocina).